Consider the following 512-residue polypeptide: Cytochrome P450 26B1 (512 aa).

Cys441 provides a ligand contact to heme.

It belongs to the cytochrome P450 family. The cofactor is heme.

The protein localises to the endoplasmic reticulum membrane. Its subcellular location is the microsome membrane. It carries out the reaction all-trans-retinoate + reduced [NADPH--hemoprotein reductase] + O2 = all-trans-4-hydroxyretinoate + oxidized [NADPH--hemoprotein reductase] + H2O + H(+). It catalyses the reaction all-trans-retinoate + reduced [NADPH--hemoprotein reductase] + O2 = all-trans-18-hydroxyretinoate + oxidized [NADPH--hemoprotein reductase] + H2O + H(+). In terms of biological role, a cytochrome P450 monooxygenase involved in the metabolism of retinoates (RAs), the active metabolites of vitamin A, and critical signaling molecules in animals. RAs exist as at least four different isomers: all-trans-RA (atRA), 9-cis-RA, 13-cis-RA, and 9,13-dicis-RA, where atRA is considered to be the biologically active isomer, although 9-cis-RA and 13-cis-RA also have activity. Catalyzes the hydroxylation of atRA primarily at C-4 and C-18, thereby contributing to the regulation of atRA homeostasis and signaling. Hydroxylation of atRA limits its biological activity and initiates a degradative process leading to its eventual elimination. Involved in the convertion of atRA to all-trans-4-oxo-RA. Can oxidize all-trans-13,14-dihydroretinoate (DRA) to metabolites which could include all-trans-4-oxo-DRA, all-trans-4-hydroxy-DRA, all-trans-5,8-epoxy-DRA, and all-trans-18-hydroxy-DRA. Shows preference for the following substrates: atRA &gt; 9-cis-RA &gt; 13-cis-RA. Plays a central role in germ cell development: acts by degrading RAs in the developing testis, preventing STRA8 expression, thereby leading to delay of meiosis. Required for the maintenance of the undifferentiated state of male germ cells during embryonic development in Sertoli cells, inducing arrest in G0 phase of the cell cycle and preventing meiotic entry. Plays a role in skeletal development, both at the level of patterning and in the ossification of bone and the establishment of some synovial joints. Essential for postnatal survival. Also has a significant activity in oxidation of tazarotenic acid and may therefore metabolize that xenobiotic in vivo. The protein is Cytochrome P450 26B1 (Cyp26b1) of Mus musculus (Mouse).